The sequence spans 206 residues: Delta and osm-11 homolog protein 1 (206 aa).

This Caenorhabditis elegans protein is Delta and osm-11 homolog protein 1 (dos-1).